Here is a 1088-residue protein sequence, read N- to C-terminus: Protein argonaute 18 (1088 aa).

The tract at residues 1–220 is disordered; that stretch reads MASRGGGQHQ…QPPPDLPQAP (220 aa). 6 stretches are compositionally biased toward gly residues: residues 20–30, 51–86, 95–127, 135–148, 161–182, and 191–206; these read GGYGRGGGGGR, YPGGRGGGYGGGGGGGGPPYYGGGGGGGGGGGGQGR, GRGYQRGMEGGGGRGGYRGDGDGGYGRGGGGYH, GRGGGGGGGGGGGY, ARGGGGGGGGYHGDGEAGYGRG, and GRGGGGRRGGRGGGGS. Pro residues predominate over residues 211–220; the sequence is QPPPDLPQAP. The PAZ domain maps to 477–574; that stretch reads TVGYFLNNYG…LPMELCNIVP (98 aa). The region spanning 747-1056 is the Piwi domain; sequence LLLVVMTDDK…LAFRARFYLT (310 aa).

Belongs to the argonaute family. Ago subfamily.

In terms of biological role, probably involved in the RNA silencing pathway. May bind to short RNAs such as microRNAs (miRNAs) or short interfering RNAs (siRNAs), and represses the translation of mRNAs which are complementary to them. This chain is Protein argonaute 18 (AGO18), found in Oryza sativa subsp. japonica (Rice).